The chain runs to 985 residues: Vacuolar membrane protease (985 aa).

Topologically, residues 1 to 20 are cytoplasmic; the sequence is MASSRAQRFNPIAFTPWPVT. The chain crosses the membrane as a helical span at residues 21 to 41; it reads CITTIVYLALLIPILVINLVV. The Vacuolar portion of the chain corresponds to 42–388; it reads PSAPETNPKG…MFGTAFAVFR (347 aa). N-linked (GlcNAc...) asparagine glycans are attached at residues Asn-53, Asn-116, and Asn-119. Residues His-175 and Asp-187 each coordinate Zn(2+). Catalysis depends on Glu-221, which acts as the Proton acceptor. Glu-222 is a binding site for Zn(2+). Asn-238 carries N-linked (GlcNAc...) asparagine glycosylation. Zn(2+) contacts are provided by Glu-247 and His-320. The helical transmembrane segment at 389 to 409 threads the bilayer; it reads LHTLFAISVALLVIAPLVIFV. The Cytoplasmic portion of the chain corresponds to 410–440; the sequence is TNRMYLFSMSKSLEGTGDQVSLRGLRGFSRT. The chain crosses the membrane as a helical span at residues 441–461; that stretch reads PIILVTATTIPICLAYLLEKV. The Vacuolar segment spans residues 462–470; that stretch reads NPYIVHSSQ. The helical transmembrane segment at 471-491 threads the bilayer; the sequence is FSVWSMMFSAWIFLAWFLACA. The Cytoplasmic segment spans residues 492 to 502; the sequence is ADFFRPSALHR. A helical transmembrane segment spans residues 503 to 523; it reads AYSYTWIFIATWIMLVINTVY. Over 524–527 the chain is Vacuolar; sequence ANQK. The chain crosses the membrane as a helical span at residues 528–548; that stretch reads GIAAGYFLLFYFAGAFLATWI. Residues 549–666 are Cytoplasmic-facing; sequence SYLELFALPR…TLPRWTWVLQ (118 aa). Residues 563 to 612 are disordered; sequence ARQTTGRRPSSLSSRLLTSSADELRSNASPSTAEFPGAAGEDTDPTESTS. The segment covering 566 to 582 has biased composition (low complexity); that stretch reads TTGRRPSSLSSRLLTSS. Residues 667–687 traverse the membrane as a helical segment; the sequence is LLLLAPIVLILVGQLALFLTA. Over 688-700 the chain is Vacuolar; the sequence is SMCQVGSDGVSTF. A helical membrane pass occupies residues 701–721; sequence VVYLACAVFTTLLCIPLFPLI. Topologically, residues 722–727 are cytoplasmic; the sequence is HRFTYH. Residues 728–748 traverse the membrane as a helical segment; the sequence is IPTFLFLVFIGTLIYNLVAFP. Topologically, residues 749–985 are vacuolar; sequence FSPANRLKTF…VEASHSFTIQ (237 aa). 3 N-linked (GlcNAc...) asparagine glycosylation sites follow: Asn-767, Asn-795, and Asn-839.

Belongs to the peptidase M28 family. It depends on Zn(2+) as a cofactor.

The protein resides in the vacuole membrane. In terms of biological role, may be involved in vacuolar sorting and osmoregulation. This chain is Vacuolar membrane protease, found in Ajellomyces capsulatus (strain G186AR / H82 / ATCC MYA-2454 / RMSCC 2432) (Darling's disease fungus).